Here is a 128-residue protein sequence, read N- to C-terminus: Aspartate 1-decarboxylase (128 aa).

The active-site Schiff-base intermediate with substrate; via pyruvic acid is serine 25. Serine 25 carries the pyruvic acid (Ser) modification. Threonine 57 is a substrate binding site. Catalysis depends on tyrosine 58, which acts as the Proton donor. Residue 73–75 (GAA) participates in substrate binding.

This sequence belongs to the PanD family. As to quaternary structure, heterooctamer of four alpha and four beta subunits. Pyruvate is required as a cofactor. Post-translationally, is synthesized initially as an inactive proenzyme, which is activated by self-cleavage at a specific serine bond to produce a beta-subunit with a hydroxyl group at its C-terminus and an alpha-subunit with a pyruvoyl group at its N-terminus.

It localises to the cytoplasm. The enzyme catalyses L-aspartate + H(+) = beta-alanine + CO2. It participates in cofactor biosynthesis; (R)-pantothenate biosynthesis; beta-alanine from L-aspartate: step 1/1. Catalyzes the pyruvoyl-dependent decarboxylation of aspartate to produce beta-alanine. The polypeptide is Aspartate 1-decarboxylase (Chlorobaculum parvum (strain DSM 263 / NCIMB 8327) (Chlorobium vibrioforme subsp. thiosulfatophilum)).